A 239-amino-acid polypeptide reads, in one-letter code: Xyloglucan-specific endo-beta-1,4-glucanase A (239 aa).

The first 14 residues, 1 to 14, serve as a signal peptide directing secretion; it reads MKLLALSLASLASA. N-linked (GlcNAc...) asparagine glycosylation occurs at Asn-172.

The protein belongs to the glycosyl hydrolase 12 (cellulase H) family.

It is found in the secreted. The enzyme catalyses xyloglucan + H2O = xyloglucan oligosaccharides.. Its function is as follows. Catalyzes endohydrolysis of 1,4-beta-D-glucosidic linkages in xyloglucan with retention of the beta-configuration of the glycosyl residues. Specific for xyloglucan and does not hydrolyze other cell wall components. Active against tamarind xyloglucan. The polypeptide is Xyloglucan-specific endo-beta-1,4-glucanase A (xgeA) (Emericella nidulans (strain FGSC A4 / ATCC 38163 / CBS 112.46 / NRRL 194 / M139) (Aspergillus nidulans)).